The following is a 143-amino-acid chain: Large ribosomal subunit protein uL11 (143 aa).

It belongs to the universal ribosomal protein uL11 family. In terms of assembly, part of the ribosomal stalk of the 50S ribosomal subunit. Interacts with L10 and the large rRNA to form the base of the stalk. L10 forms an elongated spine to which L12 dimers bind in a sequential fashion forming a multimeric L10(L12)X complex. In terms of processing, one or more lysine residues are methylated.

Forms part of the ribosomal stalk which helps the ribosome interact with GTP-bound translation factors. This Rhizobium etli (strain ATCC 51251 / DSM 11541 / JCM 21823 / NBRC 15573 / CFN 42) protein is Large ribosomal subunit protein uL11.